The chain runs to 949 residues: General transcription factor II-I repeat domain-containing protein 2A (949 aa).

2 GTF2I-like repeats span residues 98 to 192 (QVHS…QLGG) and 323 to 417 (LSSI…SNVG).

It belongs to the TFII-I family. Ubiquitous.

The protein resides in the nucleus. This Homo sapiens (Human) protein is General transcription factor II-I repeat domain-containing protein 2A (GTF2IRD2).